Here is a 463-residue protein sequence, read N- to C-terminus: Methionine aminopeptidase 2-2 (463 aa).

Positions 1-97 (MGSKSPEGHW…TLSVTELKQT (97 aa)) are disordered. A compositionally biased stretch (polar residues) spans 27 to 36 (DPQTSQNGSG). Over residues 46–57 (GDDDDDDEDAEE) the composition is skewed to acidic residues. Over residues 69–85 (KKKKRKKSNKKKKKKTK) the composition is skewed to basic residues. Over residues 86-97 (SGTLSVTELKQT) the composition is skewed to polar residues. A substrate-binding site is contributed by His-215. Positions 236, 247, and 316 each coordinate a divalent metal cation. Substrate is bound at residue His-324. Residues Glu-349 and Glu-444 each contribute to the a divalent metal cation site.

Belongs to the peptidase M24A family. Methionine aminopeptidase eukaryotic type 2 subfamily. The cofactor is Co(2+). Zn(2+) is required as a cofactor. It depends on Mn(2+) as a cofactor. Fe(2+) serves as cofactor.

The protein resides in the cytoplasm. The catalysed reaction is Release of N-terminal amino acids, preferentially methionine, from peptides and arylamides.. Cotranslationally removes the N-terminal methionine from nascent proteins. The N-terminal methionine is often cleaved when the second residue in the primary sequence is small and uncharged (Met-Ala-, Cys, Gly, Pro, Ser, Thr, or Val). This is Methionine aminopeptidase 2-2 from Neosartorya fischeri (strain ATCC 1020 / DSM 3700 / CBS 544.65 / FGSC A1164 / JCM 1740 / NRRL 181 / WB 181) (Aspergillus fischerianus).